The following is a 233-amino-acid chain: Adenosine 5'-phosphosulfate reductase (233 aa).

[4Fe-4S] cluster contacts are provided by cysteine 120, cysteine 121, cysteine 203, and cysteine 206. Residue cysteine 229 is the Nucleophile; cysteine thiosulfonate intermediate of the active site.

It belongs to the PAPS reductase family. CysH subfamily. It depends on [4Fe-4S] cluster as a cofactor.

Its subcellular location is the cytoplasm. It catalyses the reaction [thioredoxin]-disulfide + sulfite + AMP + 2 H(+) = adenosine 5'-phosphosulfate + [thioredoxin]-dithiol. Its pathway is sulfur metabolism; hydrogen sulfide biosynthesis; sulfite from sulfate. In terms of biological role, catalyzes the formation of sulfite from adenosine 5'-phosphosulfate (APS) using thioredoxin as an electron donor. The sequence is that of Adenosine 5'-phosphosulfate reductase from Bacillus pumilus (strain SAFR-032).